An 85-amino-acid chain; its full sequence is Beta-insect depressant toxin LqhIT2 (85 aa).

The N-terminal stretch at 1–21 is a signal peptide; sequence MKLLLLLIVSASMLIESLVNA. An LCN-type CS-alpha/beta domain is found at 22-82; the sequence is DGYIKRRDGC…TWKSETNTCG (61 aa). 4 cysteine pairs are disulfide-bonded: cysteine 31–cysteine 81, cysteine 35–cysteine 56, cysteine 42–cysteine 63, and cysteine 46–cysteine 65. Residue glycine 82 is modified to Glycine amide.

Belongs to the long (4 C-C) scorpion toxin superfamily. Sodium channel inhibitor family. Beta subfamily. In terms of tissue distribution, expressed by the venom gland.

Its subcellular location is the secreted. In terms of biological role, depressant insect beta-toxins cause a transient contraction paralysis followed by a slow flaccid paralysis. They bind voltage-independently at site-4 of sodium channels (Nav) and shift the voltage of activation toward more negative potentials thereby affecting sodium channel activation and promoting spontaneous and repetitive firing. This toxin is active only on insects. This is Beta-insect depressant toxin LqhIT2 from Leiurus hebraeus (Hebrew deathstalker scorpion).